A 1296-amino-acid polypeptide reads, in one-letter code: Clustered mitochondria protein homolog (1296 aa).

The disordered stretch occupies residues 1–31; it reads MTLMNGDGAHEHQAEAEPKQNGHEMGDQTEE. Residues 8–26 show a composition bias toward basic and acidic residues; the sequence is GAHEHQAEAEPKQNGHEMG. The region spanning 333–575 is the Clu domain; sequence RAEDAYTSRL…RTFPPDLNFL (243 aa). Residues 662–689 are a coiled coil; the sequence is LDGEAQLKQLEETMAAHKETVDTRSKEV. 4 TPR repeats span residues 970–1003, 1012–1045, 1096–1129, and 1138–1171; these read AFHF…FNNV, CACL…SERI, ALLD…NSKY, and ALSH…YKNQ. Residues 1242–1274 are a coiled coil; sequence QKDLEHLKAEVQRRQQLQEAIKGAENHEAKTKE. A disordered region spans residues 1261 to 1296; that stretch reads AIKGAENHEAKTKEPEMSETSDSNINAASVAPESSD. A compositionally biased stretch (basic and acidic residues) spans 1263 to 1276; it reads KGAENHEAKTKEPE. A compositionally biased stretch (polar residues) spans 1278–1296; that stretch reads SETSDSNINAASVAPESSD.

The protein belongs to the CLU family.

It is found in the cytoplasm. It localises to the cytoplasmic granule. Functionally, mRNA-binding protein involved in proper cytoplasmic distribution of mitochondria. Specifically binds mRNAs of nuclear-encoded mitochondrial proteins in the cytoplasm and regulates transport or translation of these transcripts close to mitochondria, playing a role in mitochondrial biogenesis. The chain is Clustered mitochondria protein homolog from Xenopus tropicalis (Western clawed frog).